The primary structure comprises 354 residues: Uroporphyrinogen decarboxylase (354 aa).

Substrate is bound by residues 25–29 (RQAGR), Asp-75, Tyr-152, Thr-207, and His-330.

The protein belongs to the uroporphyrinogen decarboxylase family. Homodimer.

It is found in the cytoplasm. The enzyme catalyses uroporphyrinogen III + 4 H(+) = coproporphyrinogen III + 4 CO2. It functions in the pathway porphyrin-containing compound metabolism; protoporphyrin-IX biosynthesis; coproporphyrinogen-III from 5-aminolevulinate: step 4/4. Its function is as follows. Catalyzes the decarboxylation of four acetate groups of uroporphyrinogen-III to yield coproporphyrinogen-III. This is Uroporphyrinogen decarboxylase from Xanthomonas euvesicatoria pv. vesicatoria (strain 85-10) (Xanthomonas campestris pv. vesicatoria).